Consider the following 392-residue polypeptide: 8-amino-7-oxononanoate synthase (392 aa).

R26 provides a ligand contact to substrate. 112–113 (GF) is a binding site for pyridoxal 5'-phosphate. H137 serves as a coordination point for substrate. Residues S187, H215, and T241 each coordinate pyridoxal 5'-phosphate. At K244 the chain carries N6-(pyridoxal phosphate)lysine. Substrate is bound at residue T357.

This sequence belongs to the class-II pyridoxal-phosphate-dependent aminotransferase family. BioF subfamily. As to quaternary structure, homodimer. It depends on pyridoxal 5'-phosphate as a cofactor.

It carries out the reaction 6-carboxyhexanoyl-[ACP] + L-alanine + H(+) = (8S)-8-amino-7-oxononanoate + holo-[ACP] + CO2. It participates in cofactor biosynthesis; biotin biosynthesis. In terms of biological role, catalyzes the decarboxylative condensation of pimeloyl-[acyl-carrier protein] and L-alanine to produce 8-amino-7-oxononanoate (AON), [acyl-carrier protein], and carbon dioxide. The polypeptide is 8-amino-7-oxononanoate synthase (Photobacterium profundum (strain SS9)).